Here is a 128-residue protein sequence, read N- to C-terminus: Fluoride-specific ion channel FluC (128 aa).

4 helical membrane passes run 4–24 (LILA…RYLI), 37–57 (PYGT…IMDI), 63–83 (LISG…LTTF), and 99–119 (ILMG…GVII). Glycine 78 and threonine 81 together coordinate Na(+).

This sequence belongs to the fluoride channel Fluc/FEX (TC 1.A.43) family.

The protein localises to the cell membrane. It carries out the reaction fluoride(in) = fluoride(out). With respect to regulation, na(+) is not transported, but it plays an essential structural role and its presence is essential for fluoride channel function. Fluoride-specific ion channel. Important for reducing fluoride concentration in the cell, thus reducing its toxicity. This Clostridium novyi (strain NT) protein is Fluoride-specific ion channel FluC.